Reading from the N-terminus, the 71-residue chain is uncharacterized protein (71 aa).

This is an uncharacterized protein from Vaccinia virus (strain Western Reserve) (VACV).